The primary structure comprises 728 residues: Ribosome biogenesis protein bop1-B (728 aa).

The tract at residues 1–114 (MKRGSKRESG…ENDSSDEEDI (114 aa)) is disordered. A compositionally biased stretch (acidic residues) spans 50 to 67 (SGTDSSDDEEDHSSEEVQ). 7 WD repeats span residues 393-432 (GHKD…CMKS), 434-474 (VLEG…RLLC), 514-556 (KHQK…SQNP), 559-597 (KNKG…LTKK), 600-639 (TNCK…KPYK), 643-682 (HHKK…DLLQ), and 698-728 (HRDL…RLFT).

It belongs to the WD repeat BOP1/ERB1 family. In terms of assembly, component of the PeBoW complex, composed of bop1, pes1 and wdr12. The complex is held together by bop1, which interacts with pes1 via its N-terminal domain and with wdr12 via a high-affinity interaction between the seven-bladed beta-propeller domains of the 2 proteins. The PeBoW complex associates with the 66S pre-ribosome.

Its subcellular location is the nucleus. It is found in the nucleolus. The protein resides in the nucleoplasm. In terms of biological role, component of the PeBoW complex, which is required for maturation of 28S and 5.8S ribosomal RNAs and formation of the 60S ribosome. This is Ribosome biogenesis protein bop1-B (bop1-b) from Xenopus laevis (African clawed frog).